Reading from the N-terminus, the 452-residue chain is MSLSVVILAAGKGTRMCSELPKVLHKIADKPMVQHVIDTVKSIGADSIHLIYGHGGQQLQEKISDGSLNWIKQAEQLGTGHAMQIALPHFKNDEKILMVYGDVPLLSEKTLTDLIAAQPPGGIGLLTVELDNPTGYGRIERMNGEVAGIVEQKDATVAQLSIKEVNTGILVADANDLSRWLPALSNENAAGEYYITDIIKMAHLEGRIISAVQPESATEVEGVNTRLQLANLERAYQLKKATELLLSGVMLRDPNRFDLRGTLTCGVDVEIDINVIIQGNVNLGNGVVIGANCILIDCDIAENAVIQANSIIEGSSIGARATIGPFARIRPQSVLKEEVHVGNFVEIKKSTLGNGTKCGHLSYIGDSTLGQRVNIGAGTITCNYDGVNKFHTHIGDDVFIGSDCQLIAPVTINNGATTGAGSTIMIDVPENALAIGRAKQRNINNWKRPTKK.

A pyrophosphorylase region spans residues methionine 1–arginine 226. Residues leucine 8–glycine 11, lysine 22, glutamine 73, glycine 78–threonine 79, tyrosine 100–aspartate 102, glycine 137, glutamate 151, asparagine 166, and asparagine 224 each bind UDP-N-acetyl-alpha-D-glucosamine. Aspartate 102 contacts Mg(2+). Asparagine 224 is a Mg(2+) binding site. The linker stretch occupies residues leucine 227–serine 247. Positions glycine 248 to lysine 452 are N-acetyltransferase. UDP-N-acetyl-alpha-D-glucosamine contacts are provided by arginine 330 and lysine 348. Histidine 360 serves as the catalytic Proton acceptor. Residues tyrosine 363 and asparagine 374 each coordinate UDP-N-acetyl-alpha-D-glucosamine. Residues alanine 377, asparagine 383–tyrosine 384, serine 402, alanine 420, and arginine 437 contribute to the acetyl-CoA site.

It in the N-terminal section; belongs to the N-acetylglucosamine-1-phosphate uridyltransferase family. The protein in the C-terminal section; belongs to the transferase hexapeptide repeat family. As to quaternary structure, homotrimer. Requires Mg(2+) as cofactor.

It is found in the cytoplasm. It carries out the reaction alpha-D-glucosamine 1-phosphate + acetyl-CoA = N-acetyl-alpha-D-glucosamine 1-phosphate + CoA + H(+). The catalysed reaction is N-acetyl-alpha-D-glucosamine 1-phosphate + UTP + H(+) = UDP-N-acetyl-alpha-D-glucosamine + diphosphate. It participates in nucleotide-sugar biosynthesis; UDP-N-acetyl-alpha-D-glucosamine biosynthesis; N-acetyl-alpha-D-glucosamine 1-phosphate from alpha-D-glucosamine 6-phosphate (route II): step 2/2. It functions in the pathway nucleotide-sugar biosynthesis; UDP-N-acetyl-alpha-D-glucosamine biosynthesis; UDP-N-acetyl-alpha-D-glucosamine from N-acetyl-alpha-D-glucosamine 1-phosphate: step 1/1. Its pathway is bacterial outer membrane biogenesis; LPS lipid A biosynthesis. Functionally, catalyzes the last two sequential reactions in the de novo biosynthetic pathway for UDP-N-acetylglucosamine (UDP-GlcNAc). The C-terminal domain catalyzes the transfer of acetyl group from acetyl coenzyme A to glucosamine-1-phosphate (GlcN-1-P) to produce N-acetylglucosamine-1-phosphate (GlcNAc-1-P), which is converted into UDP-GlcNAc by the transfer of uridine 5-monophosphate (from uridine 5-triphosphate), a reaction catalyzed by the N-terminal domain. The polypeptide is Bifunctional protein GlmU (Psychromonas ingrahamii (strain DSM 17664 / CCUG 51855 / 37)).